Here is a 177-residue protein sequence, read N- to C-terminus: Large ribosomal subunit protein uL6 (177 aa).

This sequence belongs to the universal ribosomal protein uL6 family. As to quaternary structure, part of the 50S ribosomal subunit.

Its function is as follows. This protein binds to the 23S rRNA, and is important in its secondary structure. It is located near the subunit interface in the base of the L7/L12 stalk, and near the tRNA binding site of the peptidyltransferase center. In Ectopseudomonas mendocina (strain ymp) (Pseudomonas mendocina), this protein is Large ribosomal subunit protein uL6.